The primary structure comprises 473 residues: Arginine biosynthesis bifunctional protein ArgJ, mitochondrial (473 aa).

The substrate site is built by Thr-201, Lys-230, Thr-241, Glu-328, Asn-468, and Thr-473. Thr-241 functions as the Nucleophile in the catalytic mechanism.

This sequence belongs to the ArgJ family. Heterodimer of an alpha and a beta chain. The alpha and beta chains are autoproteolytically processed from a single precursor protein within the mitochondrion.

It localises to the mitochondrion matrix. The catalysed reaction is N(2)-acetyl-L-ornithine + L-glutamate = N-acetyl-L-glutamate + L-ornithine. The enzyme catalyses L-glutamate + acetyl-CoA = N-acetyl-L-glutamate + CoA + H(+). The protein operates within amino-acid biosynthesis; L-arginine biosynthesis; L-ornithine and N-acetyl-L-glutamate from L-glutamate and N(2)-acetyl-L-ornithine (cyclic): step 1/1. It functions in the pathway amino-acid biosynthesis; L-arginine biosynthesis; N(2)-acetyl-L-ornithine from L-glutamate: step 1/4. Catalyzes two activities which are involved in the cyclic version of arginine biosynthesis: the synthesis of acetylglutamate from glutamate and acetyl-CoA, and of ornithine by transacetylation between acetylornithine and glutamate. The chain is Arginine biosynthesis bifunctional protein ArgJ, mitochondrial from Ajellomyces capsulatus (strain H143) (Darling's disease fungus).